Consider the following 790-residue polypeptide: F-box and leucine-rich repeat protein 13 (790 aa).

The region spanning 237-283 is the F-box domain; it reads AFDISVLPEQAILQIFLYLTFKDMMACSRVNRSWMAMIQRGSLWNSI. 6 LRR repeats span residues 503–525, 531–552, 557–579, 582–602, 606–628, and 632–657; these read QLTV…HFFD, RLRE…IRLS, NLHY…YIAS, SLIS…TILS, KLRE…AYCK, and LLEH…IFCT.

The protein belongs to the DRC6 family. In terms of assembly, component of the nexin-dynein regulatory complex (N-DRC). Directly interacts with SKP1 and CUL1. Interacts with TCTE1/DRC5.

It is found in the cytoplasm. The protein resides in the cytoskeleton. Its subcellular location is the flagellum axoneme. The protein localises to the microtubule organizing center. It localises to the centrosome. Its function is as follows. Substrate-recognition component of the SCF (SKP1-CUL1-F-box protein)-type E3 ubiquitin ligase complex. Component of the nexin-dynein regulatory complex (N-DRC), a key regulator of ciliary/flagellar motility which maintains the alignment and integrity of the distal axoneme and regulates microtubule sliding in motile axonemes. Specifically targets CEP192 isoform 3 for ubiquitin-mediated proteolysis and thereby acts as a regulator of microtubule nucleation activity. In Mus musculus (Mouse), this protein is F-box and leucine-rich repeat protein 13 (Fbxl13).